The following is a 1117-amino-acid chain: Mitochondrial protein cyt-4 (1117 aa).

An RNB domain is found at 561-916 (RQDFYTSTVY…LVHWQIQAAL (356 aa)). Positions 705–730 (VVLEVGTPPSAEDEAPTRKMTKPDEL) are disordered. A compositionally biased stretch (basic and acidic residues) spans 719–730 (APTRKMTKPDEL).

It belongs to the RNR ribonuclease family. As to quaternary structure, homodimer.

Its subcellular location is the mitochondrion. Functionally, required for RNA 5'- and 3'-end processing and splicing. May act on the RNA processing enzymes directly, or it may act on other regulatory molecules, which influence the activity or synthesis of these enzymes. The sequence is that of Mitochondrial protein cyt-4 (cyt-4) from Neurospora crassa (strain ATCC 24698 / 74-OR23-1A / CBS 708.71 / DSM 1257 / FGSC 987).